The following is a 216-amino-acid chain: Urease accessory protein UreG (216 aa).

Position 25–32 (25–32 (GPVGSGKT)) interacts with GTP.

It belongs to the SIMIBI class G3E GTPase family. UreG subfamily. In terms of assembly, homodimer. UreD, UreF and UreG form a complex that acts as a GTP-hydrolysis-dependent molecular chaperone, activating the urease apoprotein by helping to assemble the nickel containing metallocenter of UreC. The UreE protein probably delivers the nickel.

The protein resides in the cytoplasm. Functionally, facilitates the functional incorporation of the urease nickel metallocenter. This process requires GTP hydrolysis, probably effectuated by UreG. The protein is Urease accessory protein UreG of Burkholderia thailandensis (strain ATCC 700388 / DSM 13276 / CCUG 48851 / CIP 106301 / E264).